The primary structure comprises 292 residues: UDP-3-O-acyl-N-acetylglucosamine deacetylase (292 aa).

The Zn(2+) site is built by histidine 75, histidine 231, and aspartate 235. The active-site Proton donor is histidine 258.

It belongs to the LpxC family. The cofactor is Zn(2+).

It catalyses the reaction a UDP-3-O-[(3R)-3-hydroxyacyl]-N-acetyl-alpha-D-glucosamine + H2O = a UDP-3-O-[(3R)-3-hydroxyacyl]-alpha-D-glucosamine + acetate. The protein operates within glycolipid biosynthesis; lipid IV(A) biosynthesis; lipid IV(A) from (3R)-3-hydroxytetradecanoyl-[acyl-carrier-protein] and UDP-N-acetyl-alpha-D-glucosamine: step 2/6. In terms of biological role, catalyzes the hydrolysis of UDP-3-O-myristoyl-N-acetylglucosamine to form UDP-3-O-myristoylglucosamine and acetate, the committed step in lipid A biosynthesis. The polypeptide is UDP-3-O-acyl-N-acetylglucosamine deacetylase (Nautilia profundicola (strain ATCC BAA-1463 / DSM 18972 / AmH)).